Reading from the N-terminus, the 234-residue chain is Inner membrane protein YbhL (234 aa).

At 1-23 (MDRFPRSDSIVQPRAGLQTYMAQ) the chain is on the periplasmic side. The chain crosses the membrane as a helical span at residues 24–44 (VYGWMTVGLLLTAFVAWYAAN). Residues 45–56 (SAAVMELLFTNR) lie on the Cytoplasmic side of the membrane. Residues 57–77 (VFLIGLIIAQLALVIVLSAMI) traverse the membrane as a helical segment. The Periplasmic portion of the chain corresponds to 78–79 (QK). The chain crosses the membrane as a helical span at residues 80–100 (LSAGVTTMLFMLYSALTGLTL). Residues 101-102 (SS) are Cytoplasmic-facing. The helical transmembrane segment at 103–123 (IFIVYTAASIASTFVVTAGMF) threads the bilayer. Residues 124–136 (GAMSLYGYTTKRD) are Periplasmic-facing. Residues 137–157 (LSGFGNMLFMALIGIVLASLV) form a helical membrane-spanning segment. The Cytoplasmic segment spans residues 158–163 (NFWLKS). A helical transmembrane segment spans residues 164–184 (EALMWAVTYIGVIVFVGLTAY). The Periplasmic segment spans residues 185 to 206 (DTQKLKNMGEQIDTRDTSNLRK). The helical transmembrane segment at 207–227 (YSILGALTLYLDFINLFLMLL) threads the bilayer. The Cytoplasmic portion of the chain corresponds to 228-234 (RIFGNRR).

Belongs to the BI1 family.

Its subcellular location is the cell inner membrane. This is Inner membrane protein YbhL (ybhL) from Escherichia coli (strain K12).